We begin with the raw amino-acid sequence, 125 residues long: Protein AC4 (125 aa).

The protein belongs to the geminiviridae protein AC4/C4 family.

Functionally, pathogenicity determinant. May act as a suppressor of RNA-mediated gene silencing, also known as post-transcriptional gene silencing (PTGS), a mechanism of plant viral defense that limits the accumulation of viral RNAs. This chain is Protein AC4, found in Cucurbita moschata (Winter crookneck squash).